A 74-amino-acid polypeptide reads, in one-letter code: Small ribosomal subunit protein uS8c (74 aa).

The protein belongs to the universal ribosomal protein uS8 family. As to quaternary structure, part of the 30S ribosomal subunit.

Its subcellular location is the plastid. It localises to the chloroplast. In terms of biological role, one of the primary rRNA binding proteins, it binds directly to 16S rRNA central domain where it helps coordinate assembly of the platform of the 30S subunit. This chain is Small ribosomal subunit protein uS8c (rps8), found in Oenothera ammophila (Evening primerose).